The chain runs to 590 residues: G protein-coupled receptor kinase 5 (590 aa).

Positions 1 to 185 are N-terminal; that stretch reads MELENIVANT…LERQPVTKNT (185 aa). Residues 20–39 form an interaction with calmodulin region; sequence GGKRKGKSKKWKEILKFPHI. Residues 53–171 enclose the RGS domain; sequence YCSLCDKQPI…LDSMFFDRFL (119 aa). The Protein kinase domain maps to 186–448; sequence FRQYRVLGKG…AAEVKRHPFF (263 aa). ATP contacts are provided by residues 192 to 200 and Lys215; that span reads LGKGGFGEV. Asp311 (proton acceptor) is an active-site residue. The Nuclear localization signal signature appears at 388 to 395; it reads RKEKVKRE. The 66-residue stretch at 449–514 folds into the AGC-kinase C-terminal domain; sequence RNMNFKRLEA…GSVSIPWQNE (66 aa). At Ser484 the chain carries Phosphoserine; by autocatalysis. Thr485 is subject to Phosphothreonine; by autocatalysis. The disordered stretch occupies residues 531-590; the sequence is GTLPPDLNRNHPPEPPKKGLLQRLFKRQHQNNSKSSPSSKTSFNHHINSNHVSSNSTGSS. Residues 538–547 are compositionally biased toward basic and acidic residues; sequence NRNHPPEPPK. The segment at 546-565 is sufficient for membrane localization; it reads PKKGLLQRLFKRQHQNNSKS. A compositionally biased stretch (low complexity) spans 563–590; it reads SKSSPSSKTSFNHHINSNHVSSNSTGSS. At Ser579 the chain carries Phosphoserine.

It belongs to the protein kinase superfamily. AGC Ser/Thr protein kinase family. GPRK subfamily. In terms of assembly, interacts with ST13 (via the C-terminus 303-319 AA). Interacts with TP53/p53. Interacts with HTR4 (via C-terminus 330-346 AA); this interaction is promoted by 5-HT (serotonin). Interacts with HDAC5. Interacts with GIT1. Autophosphorylated. Autophosphorylation may play a critical role in the regulation of GRK5 kinase activity. Highest levels in heart, placenta, lung &gt; skeletal muscle &gt; brain, liver, pancreas &gt; kidney.

It localises to the cytoplasm. Its subcellular location is the nucleus. It is found in the cell membrane. It catalyses the reaction [G-protein-coupled receptor] + ATP = [G-protein-coupled receptor]-phosphate + ADP + H(+). With respect to regulation, inhibited by calmodulin with an IC(50) of 50 nM. Calmodulin inhibits GRK5 association with receptor and phospholipid. Serine/threonine kinase that phosphorylates preferentially the activated forms of a variety of G-protein-coupled receptors (GPCRs). Such receptor phosphorylation initiates beta-arrestin-mediated receptor desensitization, internalization, and signaling events leading to their down-regulation. Phosphorylates a variety of GPCRs, including adrenergic receptors, muscarinic acetylcholine receptors (more specifically Gi-coupled M2/M4 subtypes), dopamine receptors and opioid receptors. In addition to GPCRs, also phosphorylates various substrates: Hsc70-interacting protein/ST13, TP53/p53, HDAC5, and arrestin-1/ARRB1. Phosphorylation of ARRB1 by GRK5 inhibits G-protein independent MAPK1/MAPK3 signaling downstream of 5HT4-receptors. Phosphorylation of HDAC5, a repressor of myocyte enhancer factor 2 (MEF2) leading to nuclear export of HDAC5 and allowing MEF2-mediated transcription. Phosphorylation of TP53/p53, a crucial tumor suppressor, inhibits TP53/p53-mediated apoptosis. Phosphorylation of ST13 regulates internalization of the chemokine receptor. Phosphorylates rhodopsin (RHO) (in vitro) and a non G-protein-coupled receptor, LRP6 during Wnt signaling (in vitro). The sequence is that of G protein-coupled receptor kinase 5 (GRK5) from Homo sapiens (Human).